A 139-amino-acid chain; its full sequence is MKPAARRRARECAVQALYSWQLSQNDIADVEYQFLAEQDVKDVDVLYFRELLSGVATNSAYLDGLMKPYLSRLLEELGQVEKAVLRIALFELSKRSDVPYKVAINEAIELAKTFGAEDSHKFVNGVLDKAAPVIRPNKK.

It belongs to the NusB family.

In terms of biological role, involved in transcription antitermination. Required for transcription of ribosomal RNA (rRNA) genes. Binds specifically to the boxA antiterminator sequence of the ribosomal RNA (rrn) operons. The polypeptide is Transcription antitermination protein NusB (Salmonella agona (strain SL483)).